Here is a 121-residue protein sequence, read N- to C-terminus: Flagellar protein FliT (121 aa).

The tract at residues 1 to 50 is required for homodimerization; sequence MNNAPHLYFAWQQLVEKSQLMLRLATEEQWDELITSEMAYVNAVQEIAHL. A fliD binding region spans residues 60-98; it reads MQEQLRPMLRLILDNESKVKQLLQIRMDELAKLVGQSSV.

It belongs to the FliT family. In terms of assembly, homodimer. Interacts with FliD and FlhC.

The protein localises to the cytoplasm. The protein resides in the cytosol. Dual-function protein that regulates the transcription of class 2 flagellar operons and that also acts as an export chaperone for the filament-capping protein FliD. As a transcriptional regulator, acts as an anti-FlhDC factor; it directly binds FlhC, thus inhibiting the binding of the FlhC/FlhD complex to class 2 promoters, resulting in decreased expression of class 2 flagellar operons. As a chaperone, effects FliD transition to the membrane by preventing its premature polymerization, and by directing it to the export apparatus. This Escherichia coli (strain 55989 / EAEC) protein is Flagellar protein FliT.